The following is a 95-amino-acid chain: uncharacterized protein (95 aa).

This is an uncharacterized protein from Vaccinia virus (strain Copenhagen) (VACV).